The sequence spans 129 residues: Succinate dehydrogenase subunit 3-2, mitochondrial (129 aa).

Residues 1-58 constitute a mitochondrion transit peptide; it reads MEKYQSKARFAPLSDAPFALRGALGSSNSSFNNIDHLRQSSSSGQARSYTSSPLGALR. Residues 27–53 are compositionally biased toward polar residues; it reads SNSSFNNIDHLRQSSSSGQARSYTSSP. Residues 27–66 are disordered; sequence SNSSFNNIDHLRQSSSSGQARSYTSSPLGALRPKMFPSGN. Heme is bound at residue His87. A helical membrane pass occupies residues 105–127; the sequence is IFGAALGAVIISIPLATKFSLMF.

As to quaternary structure, component of complex II composed of eight subunits in plants: four classical SDH subunits SDH1, SDH2, SDH3 and SDH4 (a flavoprotein (FP), an iron-sulfur protein (IP), and a cytochrome b composed of a large and a small subunit.), as well as four subunits unknown in mitochondria from bacteria and heterotrophic eukaryotes. It depends on heme as a cofactor.

It localises to the mitochondrion inner membrane. It functions in the pathway carbohydrate metabolism; tricarboxylic acid cycle. Membrane-anchoring subunit of succinate dehydrogenase (SDH). The chain is Succinate dehydrogenase subunit 3-2, mitochondrial from Oryza sativa subsp. japonica (Rice).